The sequence spans 476 residues: Growth/differentiation factor 10 (476 aa).

The first 29 residues, 1–29 (MAPGLARISLRSQLLPLVPLLLLLRGAGC), serve as a signal peptide directing secretion. Residues 30–366 (GHRVPSWSSL…EKTMQKARRR (337 aa)) constitute a propeptide that is removed on maturation. N114, N152, and N277 each carry an N-linked (GlcNAc...) asparagine glycan. 2 disordered regions span residues 268 to 305 (GDFEPGAAPNSSADPRVRRAAQVSKPLQDNELPGLDER) and 330 to 358 (PRTGRKDRKKKDQDTFTPSSSQVLDFDEK). Disulfide bonds link C374–C441, C403–C473, and C407–C475. An N-linked (GlcNAc...) asparagine glycan is attached at N467.

This sequence belongs to the TGF-beta family. As to quaternary structure, homodimer or heterodimer. Can form a non-covalent complex of the mature region and the pro-region. In terms of tissue distribution, costa, costicartilage, femur, calvaria, trachea, aorta and brain. Predominantly in the cerebellum.

It localises to the secreted. Its function is as follows. Growth factor involved in osteogenesis and adipogenesis. Plays an inhibitory role in the process of osteoblast differentiation via SMAD2/3 pathway. Plays an inhibitory role in the process of adipogenesis. The sequence is that of Growth/differentiation factor 10 from Rattus norvegicus (Rat).